We begin with the raw amino-acid sequence, 163 residues long: Urease accessory protein UreE (163 aa).

The tract at residues 130 to 163 is disordered; it reads PFEPEPGAYGGGHGHTHSHDHSHQHDPAGHAHEH. Over residues 146 to 163 the composition is skewed to basic and acidic residues; the sequence is HSHDHSHQHDPAGHAHEH.

This sequence belongs to the UreE family.

The protein localises to the cytoplasm. Functionally, involved in urease metallocenter assembly. Binds nickel. Probably functions as a nickel donor during metallocenter assembly. This is Urease accessory protein UreE from Alkalilimnicola ehrlichii (strain ATCC BAA-1101 / DSM 17681 / MLHE-1).